Reading from the N-terminus, the 30-residue chain is Cyclotide mden-I (30 aa).

A cross-link (cyclopeptide (Gly-Asn)) is located at residues 1–30 (GIPCGESCVYIPCITTAIGCSCKNKVCYRN). 3 disulfides stabilise this stretch: Cys4–Cys20, Cys8–Cys22, and Cys13–Cys27.

The protein belongs to the cyclotide family. Bracelet subfamily. This is a cyclic peptide.

Functionally, probably participates in a plant defense mechanism. The sequence is that of Cyclotide mden-I from Melicytus dentatus (Tree violet).